The primary structure comprises 428 residues: MPRTYIDTLRDHEDGAKVVVYGWMQEARIMKNISFLMIRDNTGTIQATFKNDEATLDIIKRINRESIVRVDGSVNKKSISKAGIEISGTSISIVNEAEAPLPLPVVDPVQADLETRLNSRFMDLRKRNISAIFRIESALLWGIRQYLHSQKFIEVHTPKIVAAATEGGSDLFPVRYFEKDAYLNQSPQLYKEVLMSAGFDRVFEVGPAFRAEEHNTTRHLNEFTSIDIEMSFADHNDAMAMLENAIRSGIENAVRENAEDFESLGISISVPETPFPRITYEQCIDLLQKDGIDFTFGDDFSPDQLRTIGSRFSGFYFITEWPSSVRPFYTMPKSEDPRLTNSFDLQYREIEVTSGAQRVHDPKMLIQRFNEKKLDVKSFQFYVDAFKYGMPPHAGWGLGLERLTMILLGLNNIRETTLFPRDRTRIVP.

An L-aspartate-binding site is contributed by Glu166. The aspartate stretch occupies residues Gln188–Lys191. Arg210 contributes to the L-aspartate binding site. ATP-binding positions include Arg210 to Glu212, Arg218 to Leu220, and Glu351. The Mg(2+) site is built by Glu351 and Ser354. L-aspartate contacts are provided by Ser354 and Arg358. Gly399 to Arg402 is a binding site for ATP.

Belongs to the class-II aminoacyl-tRNA synthetase family. Type 2 subfamily. As to quaternary structure, homodimer. The cofactor is Mg(2+).

It is found in the cytoplasm. The enzyme catalyses tRNA(Asp) + L-aspartate + ATP = L-aspartyl-tRNA(Asp) + AMP + diphosphate. Its function is as follows. Catalyzes the attachment of L-aspartate to tRNA(Asp) in a two-step reaction: L-aspartate is first activated by ATP to form Asp-AMP and then transferred to the acceptor end of tRNA(Asp). This is Aspartate--tRNA(Asp) ligase from Thermoplasma acidophilum (strain ATCC 25905 / DSM 1728 / JCM 9062 / NBRC 15155 / AMRC-C165).